We begin with the raw amino-acid sequence, 364 residues long: MTQRWGPQRLAGGQPHAGLEDSTRASIFTYTNSNATRGPFEGPNYHIAPRWVYHVTSAWMIFVVIASVFTNGLVLAATMKFKKLRHPLNWILVNLAVADLAETIIASTISVVNQIYGYFVLGHPMCVLEGYTVSLCGITGLWSLAIISWERWLVVCKPFGNVRFDAKLAIAGIAFSWIWAAVWTAPPIFGWSRYWPHGLKTSCGPDVFSGSSYPGVQSYMIVLMITCCIIPLSVIVLCYLQVWLAIRAVAKQQKESESTQKAEKEVTRMVMVMIFAYCVCWGPYTFFACFAAAHPGYAFHPLVAALPAYFAKSATIYNPIIYVFMNRQFRNCIMQLFGKKVDDGSELSSASRTEASSVSSVSPA.

Over 1–52 (MTQRWGPQRLAGGQPHAGLEDSTRASIFTYTNSNATRGPFEGPNYHIAPRWV) the chain is Extracellular. A glycan (O-linked (GlcNAc) serine) is linked at S22. Residue N34 is glycosylated (N-linked (GlcNAc...) asparagine). The chain crosses the membrane as a helical span at residues 53–77 (YHVTSAWMIFVVIASVFTNGLVLAA). At 78-89 (TMKFKKLRHPLN) the chain is on the cytoplasmic side. A helical membrane pass occupies residues 90 to 115 (WILVNLAVADLAETIIASTISVVNQI). Residues 116–129 (YGYFVLGHPMCVLE) lie on the Extracellular side of the membrane. An intrachain disulfide couples C126 to C203. A helical transmembrane segment spans residues 130-149 (GYTVSLCGITGLWSLAIISW). Over 150 to 168 (ERWLVVCKPFGNVRFDAKL) the chain is Cytoplasmic. Residues 169-192 (AIAGIAFSWIWAAVWTAPPIFGWS) form a helical membrane-spanning segment. Over 193 to 218 (RYWPHGLKTSCGPDVFSGSSYPGVQS) the chain is Extracellular. The chain crosses the membrane as a helical span at residues 219–246 (YMIVLMITCCIIPLSVIVLCYLQVWLAI). Residues 247 to 268 (RAVAKQQKESESTQKAEKEVTR) are Cytoplasmic-facing. A helical transmembrane segment spans residues 269-292 (MVMVMIFAYCVCWGPYTFFACFAA). Residues 293–300 (AHPGYAFH) lie on the Extracellular side of the membrane. Residues 301–325 (PLVAALPAYFAKSATIYNPIIYVFM) traverse the membrane as a helical segment. K312 is subject to N6-(retinylidene)lysine. The Cytoplasmic portion of the chain corresponds to 326-364 (NRQFRNCIMQLFGKKVDDGSELSSASRTEASSVSSVSPA).

The protein belongs to the G-protein coupled receptor 1 family. Opsin subfamily. Post-translationally, phosphorylated on some or all of the serine and threonine residues present in the C-terminal region. As to expression, the three color pigments are found in the cone photoreceptor cells. Expressed in retina.

The protein localises to the membrane. In terms of biological role, visual pigments are the light-absorbing molecules that mediate vision. They consist of an apoprotein, opsin, covalently linked to cis-retinal. This Felis catus (Cat) protein is Long-wave-sensitive opsin 1 (OPN1LW).